Reading from the N-terminus, the 64-residue chain is H/ACA ribonucleoprotein complex subunit 3 (64 aa).

This sequence belongs to the NOP10 family. Component of the box H/ACA small nucleolar ribonucleoprotein (H/ACA snoRNP) complex consisting of Nop60B, Gar1, NPH2 and Nop10, and associated with H/ACA-type snoRNAs.

The protein resides in the nucleus. It localises to the nucleolus. In terms of biological role, component of the box H/ACA small nucleolar ribonucleoprotein (H/ACA snoRNP) complex, which catalyzes pseudouridylation of rRNA. This involves the isomerization of uridine such that the ribose is subsequently attached to C5, instead of the normal N1. Pseudouridine ('psi') residues may serve to stabilize the conformation of rRNAs. Required for ribosome biogenesis. H/ACA snoRNP complex-dependent ribosome biogenesis is important in female germline cell differentiation during oogenesis. This chain is H/ACA ribonucleoprotein complex subunit 3, found in Drosophila melanogaster (Fruit fly).